A 287-amino-acid chain; its full sequence is mRNA-capping enzyme regulatory subunit OPG124 (287 aa).

Belongs to the orthopoxvirus mRNA-capping enzyme regulatory subunit family. Interacts with the late transcription elongation factor VLTF-4/OPG110. Interacts with the late transcription factors VLTF-1.

Its subcellular location is the virion. Acts with RNA polymerase to initiate transcription from late gene promoters. The protein is mRNA-capping enzyme regulatory subunit OPG124 (OPG124) of Monkeypox virus.